Consider the following 539-residue polypeptide: Protein lin-14 (539 aa).

Disordered stretches follow at residues 162–230 (PTLP…SNHS) and 262–293 (ETAPPLRVAPPINGTTNGTAKAGGPERKPRKP). 2 stretches are compositionally biased toward polar residues: residues 163–183 (TLPNGQIPTTIGETSLQGTDD) and 193–214 (SVDSNGQKTDSSAASAGDNQNI). Residues 274–284 (NGTTNGTAKAG) are compositionally biased toward low complexity. Residues 296-440 (DDIVKIVRNQ…CRRVRHAKKT (145 aa)) form an involved in sequence-specific DNA-binding region.

Cleaved by caspase ced-3 in vitro. In terms of tissue distribution, high levels in hypodermal, intestinal, body wall muscle, nerve ring, and ventral nerve cord cells of embryos and L1 animals.

The protein localises to the nucleus. Functionally, heterochronic protein which controls the choice of stage specific cell fates. Involved in the temporal progression of vulval fate patterning, possibly by inhibiting lin-12. Acts as a transcription factor involved in the stage-specific repression of various genes, including insulin/insulin-like growth factor gene ins-33 and neuropeptide-encoding gene nlp-45. Binds to the consensus sequence 5'-[CT]GGA[AG]-3' in the regulatory elements of target genes. Plays a role in governing the developmental timing of male tail tip morphogenesis. Plays a role in controlling the timing of seam cell development during the larval stages. Plays a role in promoting survival at high temperatures in larvae. Involved in maintenance of the architecture of the ventral nerve cord, perhaps acting via modulating expression of the immunoglobulin domain gene zig-4. Its function is as follows. May specify L2 and later cell fates, creating a temporal switch. May be involved in specifying L1 cell fates. This chain is Protein lin-14, found in Caenorhabditis elegans.